The chain runs to 203 residues: VPS4-associated protein 1 (203 aa).

Positions 99–109 (EKETNNSKDPD) are enriched in basic and acidic residues. Disordered stretches follow at residues 99–125 (EKETNNSKDPDPTTTDSTDTSPQAKND) and 171–193 (QVNRERYLKEQENYSNTDPEELL). Residues 110 to 120 (PTTTDSTDTSP) are compositionally biased toward low complexity. Residues 121-157 (QAKNDAEILSETKKQYSKILDKVTELQRKNRKYELAK) adopt a coiled-coil conformation. Residues 171 to 182 (QVNRERYLKEQE) are compositionally biased toward basic and acidic residues.

In terms of assembly, interacts with VPS4.

Its subcellular location is the cytoplasm. The protein localises to the endosome. Functionally, VPS4-associated protein involved in trafficking to the vacuole. The polypeptide is VPS4-associated protein 1 (VFA1) (Saccharomyces cerevisiae (strain ATCC 204508 / S288c) (Baker's yeast)).